Here is a 149-residue protein sequence, read N- to C-terminus: Large ribosomal subunit protein uL15 (149 aa).

Positions 1-29 (MVSHLKKTRKLRGHVSHGHGRVGKHRKGG) are enriched in basic residues. The tract at residues 1 to 38 (MVSHLKKTRKLRGHVSHGHGRVGKHRKGGCRGGRGKAG) is disordered.

It belongs to the universal ribosomal protein uL15 family.

In Tetrahymena thermophila, this protein is Large ribosomal subunit protein uL15 (RPL27A).